The chain runs to 450 residues: MNLNDILKELKLSLIANKNIDESVYNDYIKTINIYKKDLSNYVVVVKSQFGLLAIKQFRPTIENEIKKILKQPVNISFTYEQEYQKQLEKTESINKDHSDIISKKNKKVNENTFENFVIGSSNEQAFIAVQTVSKNPGISYNPLFIYGESGMGKTHLLKAAKNYIESNFSDLKVSYMSGDEFARKAVDILQKTHKEIEQFKNEVCQNDVLIIDDVQFLSYKEKTNEIFFTIFNNFIENDKQLFFSSDKSPELLNGFDNRLITRFNMGLSIAIQKLDNKTATAIIKKEIKNQNIKTEVTNEAINFISNYYSDDVRKIKGSVSRLNFWSQQNPEEKVITIEIISDLFRDIPTSKLGILNVKKIKEVVSEKYGISVNAIDGKARSKSIVTARHIAMYLTKEILNHTLAQIGEEFGGRDHTTVINAERKIEMMLKKDKQLKKTVDILKNKILTK.

The tract at residues 1–76 (MNLNDILKEL…KKILKQPVNI (76 aa)) is domain I, interacts with DnaA modulators. Positions 76–107 (ISFTYEQEYQKQLEKTESINKDHSDIISKKNK) are domain II. The tract at residues 108 to 327 (KVNENTFENF…GSVSRLNFWS (220 aa)) is domain III, AAA+ region. 4 residues coordinate ATP: Gly151, Gly153, Lys154, and Thr155. Residues 328–450 (QQNPEEKVIT…DILKNKILTK (123 aa)) form a domain IV, binds dsDNA region.

Belongs to the DnaA family. Oligomerizes as a right-handed, spiral filament on DNA at oriC.

The protein localises to the cytoplasm. It is found in the cell membrane. Plays an essential role in the initiation and regulation of chromosomal replication. ATP-DnaA binds to the origin of replication (oriC) to initiate formation of the DNA replication initiation complex once per cell cycle. Binds the DnaA box (a 9 base pair repeat at the origin) and separates the double-stranded (ds)DNA. Forms a right-handed helical filament on oriC DNA; dsDNA binds to the exterior of the filament while single-stranded (ss)DNA is stabiized in the filament's interior. The ATP-DnaA-oriC complex binds and stabilizes one strand of the AT-rich DNA unwinding element (DUE), permitting loading of DNA polymerase. After initiation quickly degrades to an ADP-DnaA complex that is not apt for DNA replication. Binds acidic phospholipids. This is Chromosomal replication initiator protein DnaA from Mycoplasma capricolum subsp. capricolum (strain California kid / ATCC 27343 / NCTC 10154).